Here is a 207-residue protein sequence, read N- to C-terminus: Small ribosomal subunit protein uS4 (207 aa).

A disordered region spans residues 30-51 (DKSKFDSKPGQHGRTSGARTSD). The S4 RNA-binding domain occupies 97–157 (SRLDNVVYRM…EKSKKQGRIA (61 aa)).

It belongs to the universal ribosomal protein uS4 family. In terms of assembly, part of the 30S ribosomal subunit. Contacts protein S5. The interaction surface between S4 and S5 is involved in control of translational fidelity.

Its function is as follows. One of the primary rRNA binding proteins, it binds directly to 16S rRNA where it nucleates assembly of the body of the 30S subunit. In terms of biological role, with S5 and S12 plays an important role in translational accuracy. The sequence is that of Small ribosomal subunit protein uS4 from Verminephrobacter eiseniae (strain EF01-2).